Consider the following 337-residue polypeptide: Adenylosuccinate synthetase (337 aa).

GTP is bound by residues Gly12–Lys18 and Gly42–Thr44. The active-site Proton acceptor is the Asp13. The Mg(2+) site is built by Asp13 and Gly42. IMP-binding positions include Asp13–Lys16, Asn40–His43, Thr124, Arg138, Gln176, Thr191, and Arg253. The Proton donor role is filled by His43. Thr249–Arg255 lines the substrate pocket. Residues Arg255, Gly281–Asp283, and Ser321–Gly323 each bind GTP.

Belongs to the adenylosuccinate synthetase family. Homodimer. Requires Mg(2+) as cofactor.

It localises to the cytoplasm. It catalyses the reaction IMP + L-aspartate + GTP = N(6)-(1,2-dicarboxyethyl)-AMP + GDP + phosphate + 2 H(+). The protein operates within purine metabolism; AMP biosynthesis via de novo pathway; AMP from IMP: step 1/2. In terms of biological role, plays an important role in the de novo pathway of purine nucleotide biosynthesis. Catalyzes the first committed step in the biosynthesis of AMP from IMP. The polypeptide is Adenylosuccinate synthetase (Archaeoglobus fulgidus (strain ATCC 49558 / DSM 4304 / JCM 9628 / NBRC 100126 / VC-16)).